The following is a 368-amino-acid chain: Ribosomal RNA large subunit methyltransferase M (368 aa).

S-adenosyl-L-methionine is bound by residues S189, C222 to G225, D241, D261, and D278. The active-site Proton acceptor is K307.

The protein belongs to the class I-like SAM-binding methyltransferase superfamily. RNA methyltransferase RlmE family. RlmM subfamily. Monomer.

The protein resides in the cytoplasm. It catalyses the reaction cytidine(2498) in 23S rRNA + S-adenosyl-L-methionine = 2'-O-methylcytidine(2498) in 23S rRNA + S-adenosyl-L-homocysteine + H(+). Catalyzes the 2'-O-methylation at nucleotide C2498 in 23S rRNA. The protein is Ribosomal RNA large subunit methyltransferase M of Yersinia pestis bv. Antiqua (strain Angola).